The chain runs to 585 residues: Putative indole-3-acetic acid-amido synthetase GH3.9 (585 aa).

This sequence belongs to the IAA-amido conjugating enzyme family.

Its function is as follows. Catalyzes the synthesis of indole-3-acetic acid (IAA)-amino acid conjugates, providing a mechanism for the plant to cope with the presence of excess auxin. The polypeptide is Putative indole-3-acetic acid-amido synthetase GH3.9 (GH3.9) (Arabidopsis thaliana (Mouse-ear cress)).